We begin with the raw amino-acid sequence, 140 residues long: Histone H3-like protein (140 aa).

The interval 1–36 (MSRTKQTASKALGGKAPRKGISAKSIPSSGCSPAMP) is disordered. Lys-5 is subject to N6,N6,N6-trimethyllysine; alternate. Residue Lys-5 is modified to N6,N6-dimethyllysine; alternate. Residues Lys-5 and Lys-10 each carry the N6-methyllysine; alternate modification. Lys-10, Lys-15, Lys-19, and Lys-24 each carry N6-acetyllysine; alternate. Position 15 is an N6,N6-dimethyllysine; alternate (Lys-15). 2 positions are modified to N6-methyllysine; alternate: Lys-19 and Lys-24. N6-acetyllysine is present on residues Lys-56 and Lys-64.

The protein belongs to the histone H3 family. In terms of assembly, the nucleosome is a histone octamer containing two molecules each of H2A, H2B, H3 and H4 assembled in one H3-H4 heterotetramer and two H2A-H2B heterodimers. The octamer wraps approximately 147 bp of DNA. In terms of processing, mono-, di- and trimethylated to form H3K4me1/2/3. H3K4me activates gene expression by regulating transcription elongation and plays a role in telomere length maintenance. H3K4me enrichment correlates with transcription levels, and occurs in a 5' to 3' gradient with H3K4me3 enrichment at the 5'-end of genes, shifting to H3K4me2 and then H3K4me1. Post-translationally, acetylation of histone H3 leads to transcriptional activation.

The protein resides in the nucleus. The protein localises to the chromosome. Core component of nucleosome. Nucleosomes wrap and compact DNA into chromatin, limiting DNA accessibility to the cellular machineries which require DNA as a template. Histones thereby play a central role in transcription regulation, DNA repair, DNA replication and chromosomal stability. DNA accessibility is regulated via a complex set of post-translational modifications of histones, also called histone code, and nucleosome remodeling. The sequence is that of Histone H3-like protein from Encephalitozoon cuniculi (strain GB-M1) (Microsporidian parasite).